A 475-amino-acid chain; its full sequence is Ataxin-10 (475 aa).

Arg10 is subject to Omega-N-methylarginine. 2 positions are modified to phosphoserine: Ser12 and Ser77. The residue at position 82 (Thr82) is a Phosphothreonine. Ser430 bears the Phosphoserine mark.

The protein belongs to the ataxin-10 family. As to quaternary structure, homooligomer. Interacts with GNB2. Interacts with IQCB1. Interacts with OGT. Post-translationally, polyubiquitinated. In terms of processing, phosphorylation at Ser-12 by AURKB promotes the association of ATXN10 with PLK1. Phosphorylation at Ser-77 and Thr-82 by PLK1 may play a role in the regulation of cytokinesis and may stimulate the proteasome-mediated degradation of ATXN10. Ubiquitous distribution. Markedly increased expression in testis, adrenals, and brain.

It is found in the cytoplasm. Its subcellular location is the perinuclear region. The protein localises to the midbody. The protein resides in the cytoskeleton. It localises to the cilium basal body. It is found in the microtubule organizing center. Its subcellular location is the centrosome. The protein localises to the centriole. May play a role in the regulation of cytokinesis. May play a role in signaling by stimulating protein glycosylation. Induces neuritogenesis by activating the Ras-MAP kinase pathway and is necessary for the survival of cerebellar neurons. Does not appear to play a major role in ciliogenesis. This Rattus norvegicus (Rat) protein is Ataxin-10 (Atxn10).